Reading from the N-terminus, the 255-residue chain is Geranylgeranylglyceryl phosphate synthase (255 aa).

Mg(2+) contacts are provided by Asp31 and Ser60. Sn-glycerol 1-phosphate contacts are provided by residues 179-185 (YLEAGSG), 211-212 (GG), and 233-234 (GT).

Belongs to the GGGP/HepGP synthase family. Group II subfamily. Mg(2+) is required as a cofactor.

The protein localises to the cytoplasm. It catalyses the reaction sn-glycerol 1-phosphate + (2E,6E,10E)-geranylgeranyl diphosphate = sn-3-O-(geranylgeranyl)glycerol 1-phosphate + diphosphate. The protein operates within membrane lipid metabolism; glycerophospholipid metabolism. In terms of biological role, prenyltransferase that catalyzes the transfer of the geranylgeranyl moiety of geranylgeranyl diphosphate (GGPP) to the C3 hydroxyl of sn-glycerol-1-phosphate (G1P). This reaction is the first ether-bond-formation step in the biosynthesis of archaeal membrane lipids. The polypeptide is Geranylgeranylglyceryl phosphate synthase (Methanothrix thermoacetophila (strain DSM 6194 / JCM 14653 / NBRC 101360 / PT) (Methanosaeta thermophila)).